The sequence spans 178 residues: Large ribosomal subunit protein uL6 (178 aa).

This sequence belongs to the universal ribosomal protein uL6 family. As to quaternary structure, part of the 50S ribosomal subunit.

Functionally, this protein binds to the 23S rRNA, and is important in its secondary structure. It is located near the subunit interface in the base of the L7/L12 stalk, and near the tRNA binding site of the peptidyltransferase center. The sequence is that of Large ribosomal subunit protein uL6 from Thermoplasma acidophilum (strain ATCC 25905 / DSM 1728 / JCM 9062 / NBRC 15155 / AMRC-C165).